Here is a 158-residue protein sequence, read N- to C-terminus: 6,7-dimethyl-8-ribityllumazine synthase (158 aa).

Residues Phe22, Ala57 to Glu59, and Thr84 to Ile86 contribute to the 5-amino-6-(D-ribitylamino)uracil site. Gly89–Thr90 serves as a coordination point for (2S)-2-hydroxy-3-oxobutyl phosphate. His92 (proton donor) is an active-site residue. 5-amino-6-(D-ribitylamino)uracil is bound at residue Phe117. Arg131 provides a ligand contact to (2S)-2-hydroxy-3-oxobutyl phosphate.

It belongs to the DMRL synthase family. As to quaternary structure, forms an icosahedral capsid composed of 60 subunits, arranged as a dodecamer of pentamers.

The catalysed reaction is (2S)-2-hydroxy-3-oxobutyl phosphate + 5-amino-6-(D-ribitylamino)uracil = 6,7-dimethyl-8-(1-D-ribityl)lumazine + phosphate + 2 H2O + H(+). Its pathway is cofactor biosynthesis; riboflavin biosynthesis; riboflavin from 2-hydroxy-3-oxobutyl phosphate and 5-amino-6-(D-ribitylamino)uracil: step 1/2. Functionally, catalyzes the formation of 6,7-dimethyl-8-ribityllumazine by condensation of 5-amino-6-(D-ribitylamino)uracil with 3,4-dihydroxy-2-butanone 4-phosphate. This is the penultimate step in the biosynthesis of riboflavin. In Pectobacterium atrosepticum (strain SCRI 1043 / ATCC BAA-672) (Erwinia carotovora subsp. atroseptica), this protein is 6,7-dimethyl-8-ribityllumazine synthase.